Consider the following 20-residue polypeptide: Phospholipase A2 II-5b (20 aa).

It belongs to the phospholipase A2 family. Group I subfamily. Ca(2+) is required as a cofactor. In terms of tissue distribution, expressed by the venom gland.

It is found in the secreted. It catalyses the reaction a 1,2-diacyl-sn-glycero-3-phosphocholine + H2O = a 1-acyl-sn-glycero-3-phosphocholine + a fatty acid + H(+). Its function is as follows. Snake venom phospholipase A2 (PLA2) that exhibits weak enzymatic activity. PLA2 catalyzes the calcium-dependent hydrolysis of the 2-acyl groups in 3-sn-phosphoglycerides. The polypeptide is Phospholipase A2 II-5b (Notechis scutatus scutatus (Mainland tiger snake)).